We begin with the raw amino-acid sequence, 44 residues long: Photosystem I reaction center subunit IX (44 aa).

Residues 7 to 27 (YLSVAPVLSTLWFGSLAGLLI) form a helical membrane-spanning segment.

Belongs to the PsaJ family.

The protein resides in the plastid. It is found in the chloroplast thylakoid membrane. Its function is as follows. May help in the organization of the PsaE and PsaF subunits. The protein is Photosystem I reaction center subunit IX of Lactuca sativa (Garden lettuce).